The sequence spans 392 residues: Arogenate dehydratase/prephenate dehydratase 1, chloroplastic (392 aa).

The transit peptide at 1–48 directs the protein to the chloroplast; it reads MALRCFPIWVCPQTTHHRSPLMGLAEFDADKRRRFCLWECSSSASQRA. In terms of domain architecture, Prephenate dehydratase spans 107–282; sequence RISFQGIPGA…NVTRFLILAR (176 aa). The region spanning 296–387 is the ACT domain; sequence SIVFSLEEGP…SFIRILGCYP (92 aa).

In terms of tissue distribution, expressed in roots, leaves, stems, flowers and siliques.

It is found in the plastid. The protein localises to the chloroplast stroma. The enzyme catalyses L-arogenate + H(+) = L-phenylalanine + CO2 + H2O. It carries out the reaction prephenate + H(+) = 3-phenylpyruvate + CO2 + H2O. It participates in amino-acid biosynthesis; L-phenylalanine biosynthesis; L-phenylalanine from L-arogenate: step 1/1. It functions in the pathway amino-acid biosynthesis; L-phenylalanine biosynthesis; phenylpyruvate from prephenate: step 1/1. In terms of biological role, converts the prephenate produced from the shikimate-chorismate pathway into phenylalanine. Dehydratase that uses arogenate and prephenate as substrates. Utilzes more efficiently arogenate than prephenate. In Arabidopsis thaliana (Mouse-ear cress), this protein is Arogenate dehydratase/prephenate dehydratase 1, chloroplastic.